We begin with the raw amino-acid sequence, 276 residues long: MDWILICKALILGVVEGLTEFLPVSSTGHLIVAGSFLNFNDAHAKTFDVVIQFGAILAVCWEYRQRIVSIVTGLPSRPDAQRFTLNVVIATIPAIALGLLFEKKIKAVLFSPVPVAFALVVGGAIILWAEARQRERREPPRVQSIDALTPLDALKVGLAQCFALVPGMSRSGSTIIGGMLFGLDRRVATEFSFFLAIPIIFGATLYETVKDWQAFTVDSLGLFALGLVAAFVSAFVCVRWLLRFVATHDFTVFAWYRIAFGLFVLLVGYSGWLNWA.

The next 7 membrane-spanning stretches (helical) occupy residues 4–24 (ILIC…FLPV), 45–62 (KTFD…VCWE), 83–103 (FTLN…LFEK), 108–128 (VLFS…IILW), 187–207 (VATE…TLYE), 217–237 (VDSL…AFVC), and 252–272 (VFAW…YSGW).

This sequence belongs to the UppP family.

It localises to the cell inner membrane. It catalyses the reaction di-trans,octa-cis-undecaprenyl diphosphate + H2O = di-trans,octa-cis-undecaprenyl phosphate + phosphate + H(+). Catalyzes the dephosphorylation of undecaprenyl diphosphate (UPP). Confers resistance to bacitracin. This chain is Undecaprenyl-diphosphatase 1, found in Burkholderia ambifaria (strain ATCC BAA-244 / DSM 16087 / CCUG 44356 / LMG 19182 / AMMD) (Burkholderia cepacia (strain AMMD)).